Here is a 110-residue protein sequence, read N- to C-terminus: Insulin (110 aa).

Positions 1–24 are cleaved as a signal peptide; that stretch reads MALWTRLLPLLALLALLGPDPAQA. Cystine bridges form between C31-C96, C43-C109, and C95-C100. A propeptide spans 57–87 (c peptide); sequence EVEEQQGGQVELGGGPGAGLPQPLALEMALQ.

It belongs to the insulin family. In terms of assembly, heterodimer of a B chain and an A chain linked by two disulfide bonds.

The protein localises to the secreted. Insulin decreases blood glucose concentration. It increases cell permeability to monosaccharides, amino acids and fatty acids. It accelerates glycolysis, the pentose phosphate cycle, and glycogen synthesis in liver. The protein is Insulin (INS) of Ictidomys tridecemlineatus (Thirteen-lined ground squirrel).